The primary structure comprises 686 residues: Heat shock 70 kDa protein 12B (686 aa).

A disordered region spans residues Leu-12–Ala-53. A phosphoserine mark is found at Ser-25 and Ser-29. Thr-42 bears the Phosphothreonine mark. Ser-44, Ser-46, and Ser-276 each carry phosphoserine.

This sequence belongs to the heat shock protein 70 family. As to expression, highest expression in muscle and heart. Lower levels in liver and kidney.

The polypeptide is Heat shock 70 kDa protein 12B (HSPA12B) (Homo sapiens (Human)).